Consider the following 1281-residue polypeptide: Tubulin polyglutamylase TTLL5 (1281 aa).

In terms of domain architecture, TTL spans 62–407 (RYHLSYKIVR…VCQDPAQRAS (346 aa)). ATP is bound by residues Lys180, 186 to 187 (RG), 208 to 211 (SRYI), and 221 to 223 (KFD). Arg186 contributes to the a protein binding site. Position 247 (Arg247) interacts with L-glutamate. 268–269 (TN) provides a ligand contact to ATP. Residues Tyr270, Ser271, and Lys293 each contribute to the L-glutamate site. Mg(2+) contacts are provided by Asp353, Glu366, and Asn368. A c-MTBD region region spans residues 378-488 (PLDLKIKASM…RGGFIRIFPT (111 aa)). Position 384 (Lys384) interacts with L-glutamate. Disordered regions lie at residues 577 to 614 (MNVK…LREN), 1072 to 1114 (SASA…LQTG), and 1199 to 1281 (SSAT…HTKI). Over residues 584–604 (ESEEEEEVALDNEDEEQEASQ) the composition is skewed to acidic residues. Composition is skewed to polar residues over residues 1086–1113 (SGPT…SLQT), 1199–1212 (SSAT…TTLP), 1240–1263 (ATSQ…SSLN), and 1270–1281 (ITSSTDPAHTKI).

The protein belongs to the tubulin--tyrosine ligase family. In terms of assembly, interacts with the transcriptional coactivators NCOA1/SRC-1 and NCOA2/TIF2. It depends on Mg(2+) as a cofactor. Expressed in the retina, found in the rod and cone photoreceptors (at protein level). Widely expressed with highest levels in heart and skeletal muscle and low levels in other tissues.

Its subcellular location is the cell projection. It is found in the cilium. It localises to the cytoplasm. The protein localises to the cytoskeleton. The protein resides in the cilium basal body. Its subcellular location is the nucleus. It carries out the reaction L-glutamyl-[protein] + L-glutamate + ATP = gamma-L-glutamyl-L-glutamyl-[protein] + ADP + phosphate + H(+). The enzyme catalyses (L-glutamyl)(n)-gamma-L-glutamyl-L-glutamyl-[protein] + L-glutamate + ATP = (L-glutamyl)(n+1)-gamma-L-glutamyl-L-glutamyl-[protein] + ADP + phosphate + H(+). In terms of biological role, polyglutamylase which modifies tubulin, generating polyglutamate side chains on the gamma-carboxyl group of specific glutamate residues within the C-terminal tail of tubulin. Preferentially mediates ATP-dependent initiation step of the polyglutamylation reaction over the elongation step. Preferentially modifies the alpha-tubulin tail over a beta-tail. Required for CCSAP localization to both polyglutamylated spindle and cilia microtubules. Increases the effects of transcriptional coactivator NCOA2/TIF2 in glucocorticoid receptor-mediated repression and induction and in androgen receptor-mediated induction. This chain is Tubulin polyglutamylase TTLL5, found in Homo sapiens (Human).